The chain runs to 520 residues: Polycomb protein PHO (520 aa).

C2H2-type zinc fingers lie at residues 357–381 (IACPHKGCNKHFRDSSAMRKHLHTH), 386–408 (HVCAECGKAFVESSKLKRHQLVH), 414–438 (FQCTFEGCGKRFSLDFNLRTHVRIH), and 444–468 (FVCPFDACNKKFAQSTNLKSHILTH). Positions 475–497 (TSISGKSGCSNAESNSQSEDTSA) are disordered.

In terms of assembly, component of the Esc/E(z) complex, composed of Esc, E(z), Su(z)12, HDAC1/Rpd3 and Caf1-55. This complex is distinct from the PRC1 complex, which contains many other PcG proteins like Pc, Ph, Psc, Su(z)2. The two complexes however cooperate and interact together during the first 3 hours of development to establish PcG silencing. Component of the chromatin remodeling Ino80 complex. Interacts with Sfmbt to form a pho-repressive complex (PhoRC).

It is found in the nucleus. Functionally, polycomb group (PcG) protein that binds to the 5'-CNGCCATNNNNG-3' sequence found in the regulatory regions of many genes. PcG proteins act by forming multiprotein complexes, which are required to maintain the transcriptionally repressive state of homeotic genes throughout development. PcG proteins are not required to initiate repression, but to maintain it during later stages of development. They probably act via the methylation of histones, rendering chromatin heritably changed in its expressibility. Probably targets the Esc/E(z) complex to DNA. Necessary but not sufficient to recruit a functional PcG repressive complex that represses target genes, suggesting that the recruitment of the distinct PRC1 complex is also required to allow a subsequent repression. Its function is as follows. Proposed core component of the chromatin remodeling Ino80 complex which is involved in transcriptional regulation, DNA replication and probably DNA repair. The polypeptide is Polycomb protein PHO (pho) (Drosophila melanogaster (Fruit fly)).